A 1186-amino-acid polypeptide reads, in one-letter code: Partner and localizer of BRCA2 (1186 aa).

The tract at residues 1 to 160 is required for its oligomerization and is important for its focal concentration at DNA damage sites; that stretch reads MDEPPGKPLS…QKRTFISQER (160 aa). The tract at residues 1–200 is interaction with RAD51; the sequence is MDEPPGKPLS…PVTEIRTHLL (200 aa). The tract at residues 1–319 is interaction with BRCA1; sequence MDEPPGKPLS…SKSGQLPTSS (319 aa). Residues 1–579 form a DNA-binding (with the preference D loop &gt; dsDNA &gt; ssDNA) region; sequence MDEPPGKPLS…EDSLSWSNSA (579 aa). Residues 9-41 adopt a coiled-coil conformation; sequence LSCEEKEKLKEKLAFLKREYSKTLARLQRAQRA. Disordered stretches follow at residues 52–72 and 95–157; these read VEEQDCLSQQDLSPQLKHSEP and KTSI…TFIS. The span at 120-141 shows a compositional bias: basic and acidic residues; sequence RTDDTQEHFPHRVSDPSGEQKQ. Residues 143–152 are compositionally biased toward basic residues; it reads LPSRRKKQQK. Residues serine 172 and serine 190 each carry the phosphoserine modification. A disordered region spans residues 252 to 273; sequence TLSDSGSSQHLEHIPPKGSSEL. Position 285 is a phosphoserine (serine 285). The segment at 346–365 is disordered; that stretch reads KEQNQTEKSLKSPSDTLDGR. Phosphoserine is present on residues serine 376 and serine 387. A chAM (Chromatin-association motif); required for chromatin association, mediates nucleosome association region spans residues 395–446; it reads SCTVPEGLLFPAEYYVRTTRSMSNCQRKVAVEAVIQSHLDVKKKGFKNKNKD. The interval 440–525 is disordered; the sequence is FKNKNKDASK…RKSACTPASD (86 aa). At serine 454 the chain carries Phosphoserine. A compositionally biased stretch (polar residues) spans 467-488; sequence GTCTGQPSSRTSQKLLSLTKVS. Serine 660 carries the post-translational modification Phosphoserine. Disordered stretches follow at residues 679-698 and 774-798; these read PGKSHPKRPNSQSQHTKTGL and KQFDSSGSPAKPHTTLQVSGRQGQP. The segment covering 687 to 698 has biased composition (polar residues); it reads PNSQSQHTKTGL. The interval 775–1186 is required for interaction with POLH and POLH DNA synthesis stimulation; that stretch reads QFDSSGSPAK…DGNIFVYHYS (412 aa). Serine 781 bears the Phosphoserine mark. Residues 853–1186 form an interaction with RAD51, BRCA2 and POLH region; that stretch reads GNLQLVSELK…DGNIFVYHYS (334 aa). WD repeat units follow at residues 854–915, 917–961, 962–1009, 1010–1052, 1058–1109, 1115–1153, and 1155–1186; these read NLQL…WHFA, VPVL…QVLL, KSGN…LMPP, EETI…MHID, SVCH…MLYC, AGRFLEGDVKDHCAAAILTSGTIAIWDLLLGQCTALLPP, and SDQHWSFVKWSGTDSHLLAGQKDGNIFVYHYS.

In terms of assembly, homooligomer; dissociated upon DNA damage thus allowing association with BRCA1. Oligomerization is essential for its focal accumulation at DNA breaks. Part of a BRCA complex containing BRCA1, BRCA2 and PALB2. Interacts with BRCA1 and this interaction is essential for its function in HRR. Interacts with RAD51AP1 and MORF4L1/MRG15. Component of the homologous recombination repair (HR) complex composed of ERCC5/XPG, BRCA2, PALB2, DSS1 and RAD51. Within the complex, interacts with ERCC5/XPG and BRCA2. Interacts with BRCA2, RAD51C, RAD51 and XRCC3; the interactions are direct and it may serve as a scaffold for a HR complex containing PALB2, BRCA2, RAD51C, RAD51 and XRCC3. Interacts with POLH; the interaction is direct.

It is found in the nucleus. Plays a critical role in homologous recombination repair (HRR) through its ability to recruit BRCA2 and RAD51 to DNA breaks. Strongly stimulates the DNA strand-invasion activity of RAD51, stabilizes the nucleoprotein filament against a disruptive BRC3-BRC4 polypeptide and helps RAD51 to overcome the suppressive effect of replication protein A (RPA). Functionally cooperates with RAD51AP1 in promoting of D-loop formation by RAD51. Serves as the molecular scaffold in the formation of the BRCA1-PALB2-BRCA2 complex which is essential for homologous recombination. Via its WD repeats is proposed to scaffold a HR complex containing RAD51C and BRCA2 which is thought to play a role in HR-mediated DNA repair. Essential partner of BRCA2 that promotes the localization and stability of BRCA2. Also enables its recombinational repair and checkpoint functions of BRCA2. May act by promoting stable association of BRCA2 with nuclear structures, allowing BRCA2 to escape the effects of proteasome-mediated degradation. Binds DNA with high affinity for D loop, which comprises single-stranded, double-stranded and branched DNA structures. May play a role in the extension step after strand invasion at replication-dependent DNA double-strand breaks; together with BRCA2 is involved in both POLH localization at collapsed replication forks and DNA polymerization activity. The polypeptide is Partner and localizer of BRCA2 (PALB2) (Homo sapiens (Human)).